We begin with the raw amino-acid sequence, 146 residues long: uncharacterized protein (146 aa).

This is an uncharacterized protein from Acidianus filamentous virus 2 (isolate Italy/Pozzuoli) (AFV-2).